The sequence spans 1190 residues: PAN2-PAN3 deadenylation complex catalytic subunit PAN2 (1190 aa).

WD repeat units lie at residues 24–63 (TTIVNITSLQFDSVQNFIWCGDSRGYTRSFTGSFATNSLY), 129–166 (NKFNNLQAMTFNCNSFNDVVVGTDTSMMKFDLNKPNVL), 167–207 (SSFD…TMKT), 222–264 (GNYI…AIAP), 266–306 (PFPA…NVYL), and 322–361 (NNKPRMSNLEISENGDFLVFNDNCDNMHLWSISPSSKDFV). Residues 364 to 511 (PQPVEQPDII…FQYKFQGKLN (148 aa)) form a linker region. In terms of domain architecture, USP spans 512–924 (KVPNCYSRLQ…KPIVIMYQQT (413 aa)). The region spanning 988–1158 (VAIDAEFVML…EDANTALLLY (171 aa)) is the Exonuclease domain. A divalent metal cation contacts are provided by Asp991, Glu993, Asp1097, and Asp1150.

The protein belongs to the peptidase C19 family. PAN2 subfamily. In terms of assembly, forms a heterotrimer with an asymmetric homodimer of the regulatory subunit PAN3 to form the poly(A)-nuclease (PAN) deadenylation complex. A divalent metal cation serves as cofactor.

It localises to the cytoplasm. The catalysed reaction is Exonucleolytic cleavage of poly(A) to 5'-AMP.. Its activity is regulated as follows. Positively regulated by the regulatory subunit PAN3. Catalytic subunit of the poly(A)-nuclease (PAN) deadenylation complex, one of two cytoplasmic mRNA deadenylases involved in mRNA turnover. PAN specifically shortens poly(A) tails of RNA and the activity is stimulated by poly(A)-binding protein PAB1. PAN deadenylation is followed by rapid degradation of the shortened mRNA tails by the CCR4-NOT complex. Deadenylated mRNAs are then degraded by two alternative mechanisms, namely exosome-mediated 3'-5' exonucleolytic degradation, or deadenylation-dependent mRNA decaping and subsequent 5'-3' exonucleolytic degradation by XRN1. May also be involved in post-transcriptional maturation of mRNA poly(A) tails. This Candida albicans (strain SC5314 / ATCC MYA-2876) (Yeast) protein is PAN2-PAN3 deadenylation complex catalytic subunit PAN2.